We begin with the raw amino-acid sequence, 417 residues long: Putative UDP-arabinose 4-epimerase 2 (417 aa).

Residues 1–31 (MLNLGRARTGRQNRSMSFEGLDFADPKKNNN) lie on the Cytoplasmic side of the membrane. The chain crosses the membrane as a helical; Signal-anchor for type II membrane protein span at residues 32–54 (YMGKIVLVMTLTAMCILLLNQSP). Residues 55 to 417 (TFNTPSVFSR…YGSSSLVSAY (363 aa)) are Lumenal-facing. 71–102 (HVLVTGGAGYIGSHAALRLLKDSYRVTIVDNL) contributes to the NAD(+) binding site. The active-site Proton acceptor is the Tyr-219.

Belongs to the NAD(P)-dependent epimerase/dehydratase family. NAD(+) is required as a cofactor.

The protein resides in the golgi apparatus. Its subcellular location is the golgi stack membrane. The enzyme catalyses UDP-beta-L-arabinopyranose = UDP-alpha-D-xylose. Its pathway is nucleotide-sugar biosynthesis; UDP-L-arabinose biosynthesis; UDP-L-arabinose from UDP-alpha-D-xylose: step 1/1. It functions in the pathway cell wall biogenesis; cell wall polysaccharide biosynthesis. This is Putative UDP-arabinose 4-epimerase 2 from Arabidopsis thaliana (Mouse-ear cress).